The primary structure comprises 314 residues: D-alanine--D-alanine ligase (314 aa).

The ATP-grasp domain occupies 115–310 (KQVWQSVGLV…FNELVLEILA (196 aa)). 141-196 (LDSLGGQGFVKPAHEGSSIGMSVVSTAQELKAAYEKAAHYDAKVLVERRIVGREFT) is an ATP binding site. Residues Asp264, Glu277, and Asn279 each contribute to the Mg(2+) site.

Belongs to the D-alanine--D-alanine ligase family. Mg(2+) serves as cofactor. Mn(2+) is required as a cofactor.

The protein resides in the cytoplasm. It carries out the reaction 2 D-alanine + ATP = D-alanyl-D-alanine + ADP + phosphate + H(+). It functions in the pathway cell wall biogenesis; peptidoglycan biosynthesis. Functionally, cell wall formation. This chain is D-alanine--D-alanine ligase, found in Saccharophagus degradans (strain 2-40 / ATCC 43961 / DSM 17024).